We begin with the raw amino-acid sequence, 158 residues long: NAD(P)H-quinone oxidoreductase subunit J, chloroplastic (158 aa).

The protein belongs to the complex I 30 kDa subunit family. In terms of assembly, NDH is composed of at least 16 different subunits, 5 of which are encoded in the nucleus.

The protein localises to the plastid. The protein resides in the chloroplast thylakoid membrane. It catalyses the reaction a plastoquinone + NADH + (n+1) H(+)(in) = a plastoquinol + NAD(+) + n H(+)(out). The enzyme catalyses a plastoquinone + NADPH + (n+1) H(+)(in) = a plastoquinol + NADP(+) + n H(+)(out). Its function is as follows. NDH shuttles electrons from NAD(P)H:plastoquinone, via FMN and iron-sulfur (Fe-S) centers, to quinones in the photosynthetic chain and possibly in a chloroplast respiratory chain. The immediate electron acceptor for the enzyme in this species is believed to be plastoquinone. Couples the redox reaction to proton translocation, and thus conserves the redox energy in a proton gradient. In Spinacia oleracea (Spinach), this protein is NAD(P)H-quinone oxidoreductase subunit J, chloroplastic.